The following is a 483-amino-acid chain: Regulatory protein ViaA (483 aa).

Belongs to the ViaA family. Homodimer. Interacts with RavA.

It is found in the cytoplasm. In terms of biological role, component of the RavA-ViaA chaperone complex, which may act on the membrane to optimize the function of some of the respiratory chains. ViaA stimulates the ATPase activity of RavA. This is Regulatory protein ViaA from Escherichia coli O81 (strain ED1a).